Consider the following 86-residue polypeptide: UPF0297 protein SAHV_1604 (86 aa).

The protein belongs to the UPF0297 family.

The polypeptide is UPF0297 protein SAHV_1604 (Staphylococcus aureus (strain Mu3 / ATCC 700698)).